Consider the following 646-residue polypeptide: Long-chain fatty acid transport protein 1 (646 aa).

Residues 1–13 lie on the Extracellular side of the membrane; sequence MRTPGAGTASVAS. A helical membrane pass occupies residues 14-34; the sequence is LGLLWLLGLPWTWSAAAAFGV. The Cytoplasmic segment spans residues 35 to 646; it reads YVGSGGWRFL…ARICAGDFSL (612 aa). A sufficient for oligomerization region spans residues 191–475; it reads EVSEQLGKSL…YVSDSATNKK (285 aa). 246–257 lines the AMP pocket; sequence YIYTSGTTGLPK.

It belongs to the ATP-dependent AMP-binding enzyme family. As to quaternary structure, self-associates. May function as a homodimer. Interacts with EPRS1; mediates the translocation of SLC27A1 from the cytoplasm to the plasma membrane thereby increasing the uptake of long-chain fatty acids. Interacts with DGAT2 and this interaction is enhanced in the presence of ZFYVE1. As to expression, expressed in muscle.

The protein localises to the cell membrane. Its subcellular location is the endomembrane system. It localises to the cytoplasm. The catalysed reaction is a fatty acid(in) = a fatty acid(out). It catalyses the reaction (9Z)-octadecenoate(out) = (9Z)-octadecenoate(in). It carries out the reaction hexadecanoate(out) = hexadecanoate(in). The enzyme catalyses (5Z,8Z,11Z,14Z)-eicosatetraenoate(out) = (5Z,8Z,11Z,14Z)-eicosatetraenoate(in). The catalysed reaction is (9Z,12Z)-octadecadienoate(out) = (9Z,12Z)-octadecadienoate(in). It catalyses the reaction a long-chain fatty acid + ATP + CoA = a long-chain fatty acyl-CoA + AMP + diphosphate. It carries out the reaction (5Z,8Z,11Z,14Z)-eicosatetraenoate + ATP + CoA = (5Z,8Z,11Z,14Z)-eicosatetraenoyl-CoA + AMP + diphosphate. The enzyme catalyses a very long-chain fatty acid + ATP + CoA = a very long-chain fatty acyl-CoA + AMP + diphosphate. The catalysed reaction is tetracosanoate + ATP + CoA = tetracosanoyl-CoA + AMP + diphosphate. Inhibited by Triacsin C. In terms of biological role, mediates the import of long-chain fatty acids (LCFA) into the cell by facilitating their transport at the plasma membrane. Also functions as an acyl-CoA ligase catalyzing the ATP-dependent formation of fatty acyl-CoA using LCFA and very-long-chain fatty acids (VLCFA) as substrates, which prevents fatty acid efflux from cells and might drive more fatty acid uptake. May act directly as a bona fide transporter, or alternatively, in a cytoplasmic or membrane-associated multimeric protein complex to trap and draw fatty acids towards accumulation. Plays a pivotal role in regulating available LCFA substrates from exogenous sources in tissues undergoing high levels of beta-oxidation or triglyceride synthesis. May be involved in regulation of cholesterol metabolism. Probably involved in fatty acid transport across the blood barrier. The chain is Long-chain fatty acid transport protein 1 from Rattus norvegicus (Rat).